The following is a 320-amino-acid chain: UDP-N-acetylenolpyruvoylglucosamine reductase (320 aa).

Residues 34 to 200 form the FAD-binding PCMH-type domain; it reads RAGGLAEVFF…TSAVFEGFAE (167 aa). The active site involves R180. S229 functions as the Proton donor in the catalytic mechanism. The active site involves E299.

Belongs to the MurB family. FAD is required as a cofactor.

Its subcellular location is the cytoplasm. It carries out the reaction UDP-N-acetyl-alpha-D-muramate + NADP(+) = UDP-N-acetyl-3-O-(1-carboxyvinyl)-alpha-D-glucosamine + NADPH + H(+). It participates in cell wall biogenesis; peptidoglycan biosynthesis. In terms of biological role, cell wall formation. The polypeptide is UDP-N-acetylenolpyruvoylglucosamine reductase (Mesorhizobium japonicum (strain LMG 29417 / CECT 9101 / MAFF 303099) (Mesorhizobium loti (strain MAFF 303099))).